The primary structure comprises 378 residues: Chaperone protein DnaJ 2 (378 aa).

The J domain occupies 4–68 (DYYAVLGVRR…QKKQVYDLGG (65 aa)). The segment at 130–212 (GTTKDIQVET…CAGDGRVRSR (83 aa)) adopts a CR-type zinc-finger fold. Zn(2+) is bound by residues C143, C146, C160, C163, C186, C189, C200, and C203. CXXCXGXG motif repeat units follow at residues 143–150 (CTTCSGEG), 160–167 (CDMCRGRG), 186–193 (CPQCQGFG), and 200–207 (CPECAGDG). The disordered stretch occupies residues 351–378 (RGEERPTGQFQPGQQGLFSRLKDAFNGR). A compositionally biased stretch (polar residues) spans 358–367 (GQFQPGQQGL).

It belongs to the DnaJ family. In terms of assembly, homodimer. It depends on Zn(2+) as a cofactor.

Its subcellular location is the cytoplasm. Its function is as follows. Participates actively in the response to hyperosmotic and heat shock by preventing the aggregation of stress-denatured proteins and by disaggregating proteins, also in an autonomous, DnaK-independent fashion. Unfolded proteins bind initially to DnaJ; upon interaction with the DnaJ-bound protein, DnaK hydrolyzes its bound ATP, resulting in the formation of a stable complex. GrpE releases ADP from DnaK; ATP binding to DnaK triggers the release of the substrate protein, thus completing the reaction cycle. Several rounds of ATP-dependent interactions between DnaJ, DnaK and GrpE are required for fully efficient folding. Also involved, together with DnaK and GrpE, in the DNA replication of plasmids through activation of initiation proteins. This chain is Chaperone protein DnaJ 2, found in Streptomyces avermitilis (strain ATCC 31267 / DSM 46492 / JCM 5070 / NBRC 14893 / NCIMB 12804 / NRRL 8165 / MA-4680).